A 688-amino-acid polypeptide reads, in one-letter code: Elongation factor G (688 aa).

A tr-type G domain is found at 6–280 (KLFRNFGIMA…AVVDFLPSPI (275 aa)). Residues 15-22 (AHIDAGKT), 79-83 (DTPGH), and 133-136 (NKMD) contribute to the GTP site.

Belongs to the TRAFAC class translation factor GTPase superfamily. Classic translation factor GTPase family. EF-G/EF-2 subfamily.

The protein resides in the cytoplasm. Functionally, catalyzes the GTP-dependent ribosomal translocation step during translation elongation. During this step, the ribosome changes from the pre-translocational (PRE) to the post-translocational (POST) state as the newly formed A-site-bound peptidyl-tRNA and P-site-bound deacylated tRNA move to the P and E sites, respectively. Catalyzes the coordinated movement of the two tRNA molecules, the mRNA and conformational changes in the ribosome. In Ureaplasma urealyticum serovar 10 (strain ATCC 33699 / Western), this protein is Elongation factor G.